An 827-amino-acid polypeptide reads, in one-letter code: Centrosomal protein of 95 kDa (827 aa).

5 disordered regions span residues 115–145 (ISES…ERTE), 183–249 (GDTA…MVPS), 308–372 (FLTS…MSEK), 388–476 (LGDR…DSCH), and 489–558 (ELRK…KASP). The span at 123–145 (SETEQYSKDSHGEEAGEDLERTE) shows a compositional bias: basic and acidic residues. Over residues 187–199 (HTFSQRSNGAQNS) the composition is skewed to polar residues. Basic and acidic residues-rich tracts occupy residues 327–343 (EATR…DENR) and 360–372 (PLTE…MSEK). Phosphoserine is present on residues Ser-447, Ser-449, and Ser-451. 2 coiled-coil regions span residues 584–633 (LTKM…VKKE) and 701–795 (LQIQ…DDDA).

The protein localises to the cytoplasm. The protein resides in the cytoskeleton. It is found in the microtubule organizing center. Its subcellular location is the centrosome. It localises to the spindle pole. In Mus musculus (Mouse), this protein is Centrosomal protein of 95 kDa (Cep95).